A 100-amino-acid chain; its full sequence is Urease subunit gamma (100 aa).

The protein belongs to the urease gamma subunit family. As to quaternary structure, heterotrimer of UreA (gamma), UreB (beta) and UreC (alpha) subunits. Three heterotrimers associate to form the active enzyme.

The protein localises to the cytoplasm. It catalyses the reaction urea + 2 H2O + H(+) = hydrogencarbonate + 2 NH4(+). It functions in the pathway nitrogen metabolism; urea degradation; CO(2) and NH(3) from urea (urease route): step 1/1. The sequence is that of Urease subunit gamma from Bordetella bronchiseptica (strain ATCC BAA-588 / NCTC 13252 / RB50) (Alcaligenes bronchisepticus).